Consider the following 257-residue polypeptide: TLC domain-containing protein 3A (257 aa).

7 helical membrane passes run M1–W21, L42–C62, W71–M91, L114–I134, L142–L162, G181–W201, and L220–L240. Residues D33 to D249 enclose the TLC domain.

Interacts with GGT7 isoform 3 and SLC3A2.

The protein localises to the cell membrane. The chain is TLC domain-containing protein 3A (Tlcd3a) from Mus musculus (Mouse).